The following is a 108-amino-acid chain: Glutaredoxin-C10 (108 aa).

Residues 1–107 (MERVAKLASE…PMLKNAGALW (107 aa)) form the Glutaredoxin domain. C21 and C24 form a disulfide bridge. A Responsive for interaction with TGA factors motif is present at residues 105–108 (ALWL).

This sequence belongs to the glutaredoxin family. CC-type subfamily.

It localises to the cytoplasm. It is found in the nucleus. Has a glutathione-disulfide oxidoreductase activity in the presence of NADPH and glutathione reductase. Reduces low molecular weight disulfides and proteins. The chain is Glutaredoxin-C10 (GRXC10) from Oryza sativa subsp. japonica (Rice).